The primary structure comprises 251 residues: 2,3-bisphosphoglycerate-dependent phosphoglycerate mutase (251 aa).

Substrate contacts are provided by residues 7–14 (RHGESEWN), 20–21 (TG), Arg-59, 86–89 (ERHY), Lys-97, 113–114 (RR), and 186–187 (GN). His-8 functions as the Tele-phosphohistidine intermediate in the catalytic mechanism. The active-site Proton donor/acceptor is Glu-86.

It belongs to the phosphoglycerate mutase family. BPG-dependent PGAM subfamily.

The catalysed reaction is (2R)-2-phosphoglycerate = (2R)-3-phosphoglycerate. The protein operates within carbohydrate degradation; glycolysis; pyruvate from D-glyceraldehyde 3-phosphate: step 3/5. Its function is as follows. Catalyzes the interconversion of 2-phosphoglycerate and 3-phosphoglycerate. The protein is 2,3-bisphosphoglycerate-dependent phosphoglycerate mutase of Treponema pallidum (strain Nichols).